The sequence spans 633 residues: Telomere-binding protein 1 (633 aa).

The tract at residues 253–272 (HAADRDDDENSSGCVHPSTS) is disordered. Positions 263–272 (SSGCVHPSTS) are enriched in polar residues. Positions 351-430 (VKLTIKSFNI…LNDIGFTLEC (80 aa)) constitute a Ubiquitin-like domain. The sufficient for telomeric DNA binding stretch occupies residues 506–615 (PFADPNSLAL…RVLAAQAYWS (110 aa)). Residues 529-588 (GQRRIRRPFTVAEVELLVEAVEHLGTGRWRDVKFRAFENVHHRTYVDLKDKWKTLVHTAS) form the HTH myb-type domain. Residues 534–584 (RRPFTVAEVELLVEAVEHLGTGRWRDVKFRAFENVHHRTYVDLKDKWKTLV) enclose the SANT domain. The segment at residues 557-584 (WRDVKFRAFENVHHRTYVDLKDKWKTLV) is a DNA-binding region (H-T-H motif).

As to quaternary structure, homodimer. As to expression, ubiquitous.

It localises to the chromosome. It is found in the telomere. Functionally, binds the telomeric double-stranded 5'TTTAGGG-3' repeat and regulates telomere length and structure. The sequence is that of Telomere-binding protein 1 (TBP1) from Oryza sativa subsp. japonica (Rice).